The sequence spans 458 residues: Monomethylamine methyltransferase MtmB (458 aa).

O202 is a non-standard amino acid (pyrrolysine).

Belongs to the monomethylamine methyltransferase family. As to quaternary structure, can form a complex with MtmC.

It catalyses the reaction Co(I)-[methylamine-specific corrinoid protein] + methylamine + H(+) = methyl-Co(III)-[methylamine-specific corrinoid protein] + NH4(+). Its pathway is one-carbon metabolism; methanogenesis from methylamine. Functionally, catalyzes the transfer of the methyl group from monomethylamine to the corrinoid cofactor of MtmC. The polypeptide is Monomethylamine methyltransferase MtmB (mtmB1) (Methanosarcina mazei (strain ATCC BAA-159 / DSM 3647 / Goe1 / Go1 / JCM 11833 / OCM 88) (Methanosarcina frisia)).